Reading from the N-terminus, the 354-residue chain is DNA integrity scanning protein DisA (354 aa).

The DAC domain occupies 6–144 (DDELKKILKI…GDIKYVLRDS (139 aa)). Residues Gly-73, Leu-91, and 104-108 (TRHRT) contribute to the ATP site.

The protein belongs to the DisA family. In terms of assembly, homooctamer. Mg(2+) serves as cofactor.

The enzyme catalyses 2 ATP = 3',3'-c-di-AMP + 2 diphosphate. Its function is as follows. Participates in a DNA-damage check-point that is active prior to asymmetric division when DNA is damaged. DisA forms globular foci that rapidly scan along the chromosomes during sporulation, searching for lesions. When a lesion is present, DisA pauses at the lesion site. This triggers a cellular response that culminates in a temporary block in sporulation initiation. Functionally, also has diadenylate cyclase activity, catalyzing the condensation of 2 ATP molecules into cyclic di-AMP (c-di-AMP). c-di-AMP acts as a signaling molecule that couples DNA integrity with progression of sporulation. The rise in c-di-AMP level generated by DisA while scanning the chromosome, operates as a positive signal that advances sporulation; upon encountering a lesion, the DisA focus arrests at the damaged site and halts c-di-AMP synthesis. The polypeptide is DNA integrity scanning protein DisA (Clostridium perfringens (strain SM101 / Type A)).